The primary structure comprises 616 residues: Chaperone protein HtpG (616 aa).

The a; substrate-binding stretch occupies residues 1-333 (MKKQFDTEVN…CQDLPLNVSR (333 aa)). Positions 334–542 (EILQQNKILS…SNDPTYQMQK (209 aa)) are b. A c region spans residues 543 to 616 (IMLSMGQEVK…INEFLEKDLL (74 aa)).

Belongs to the heat shock protein 90 family. Homodimer.

The protein localises to the cytoplasm. Its function is as follows. Molecular chaperone. Has ATPase activity. This Borreliella afzelii (strain PKo) (Borrelia afzelii) protein is Chaperone protein HtpG.